Here is a 237-residue protein sequence, read N- to C-terminus: Splicing factor U2AF 35 kDa subunit (237 aa).

An N-acetylalanine modification is found at Ala-2. The segment at 12–40 (EKDKVNCSFYFKIGACRHGDRCSRLHNKP) adopts a C3H1-type 1 zinc-finger fold. Lys-39 bears the N6-methyllysine mark. Ser-61 and Ser-145 each carry phosphoserine. The RRM domain maps to 65-147 (LRCAVSDVEM…QPIHAELSPV (83 aa)). Residues 149-176 (DFREACCRQYEMGECTRGGFCNFMHLKP) form a C3H1-type 2 zinc finger. Arg-165 is modified (omega-N-methylarginine). Residues 185 to 237 (LYGRRRKKHRSRSRSRERRSRSRDRGRGGGGGGGGGRERDRRRSRDRERSGRF) form a disordered region. Basic residues predominate over residues 188 to 208 (RRRKKHRSRSRSRERRSRSRD). Residues 220-237 (GRERDRRRSRDRERSGRF) are compositionally biased toward basic and acidic residues.

This sequence belongs to the splicing factor SR family. As to quaternary structure, identified in the spliceosome C complex. Heterodimer with U2AF2. Interacts (via RS domain) with PHF5A (via N-terminus). Interacts with ZRANB2. Interacts with SDE2. Interacts with SF3B1.

It is found in the nucleus. Its subcellular location is the nucleus speckle. Functionally, plays a critical role in both constitutive and enhancer-dependent splicing by mediating protein-protein interactions and protein-RNA interactions required for accurate 3'-splice site selection. Recruits U2 snRNP to the branch point. Directly mediates interactions between U2AF2 and proteins bound to the enhancers and thus may function as a bridge between U2AF2 and the enhancer complex to recruit it to the adjacent intron. This chain is Splicing factor U2AF 35 kDa subunit (U2AF1), found in Bos taurus (Bovine).